The primary structure comprises 1745 residues: Collagen alpha-3(V) chain (1745 aa).

An N-terminal signal peptide occupies residues 1-29; the sequence is MGNRRDLGQPRAGLCLLLAALQLLPGTQA. The Laminin G-like domain occupies 62–224; that stretch reads DRAFRIGQAS…QACERYLPDC (163 aa). 2 N-linked (GlcNAc...) asparagine glycosylation sites follow: N102 and N141. A nonhelical region region spans residues 211–391; the sequence is QAAFQACERY…AVIEKGQQFE (181 aa). Disordered stretches follow at residues 230-304, 322-362, 387-439, and 476-1492; these read AATV…TPTP, RSLD…EYPS, GQQF…RGPP, and SMKG…PAEL. The span at 244–267 shows a compositional bias: basic residues; sequence PRRKGKGKGRKKGRGRKGKGRKKN. S349 carries an O-linked (Xyl...) (chondroitin sulfate) serine glycan. Collagen-like domains lie at 391 to 440 and 482 to 538; these read EGPP…GPPG and GPVG…DGAR. Positions 392–1489 are triple-helical region; that stretch reads GPPGAPGPQG…AGPPGPPGAP (1098 aa). Positions 406–424 are enriched in pro residues; sequence SGPPGPPGFPGDPGPPGPA. Low complexity-rich tracts occupy residues 426–439, 489–499, and 597–619; these read LPGI…RGPP, RPGPVGLPGHP, and EPGP…PGVT. Basic and acidic residues predominate over residues 724–733; sequence QGEKGEKGED. Residues 765 to 792 are compositionally biased toward low complexity; the sequence is PKGQAGQAGEEGPPGSAGEKGKLGVPGL. Collagen-like domains lie at 824–877, 905–950, and 951–989; these read GQPG…QGPP, GFQG…GLPG, and LEGR…GDPG. The segment covering 967–979 has biased composition (low complexity); sequence LGKEGPAGLRGFP. Residues 1016–1025 show a composition bias toward gly residues; sequence GPAGGIGLPG. Composition is skewed to low complexity over residues 1116-1126 and 1141-1152; these read ADGAQGRRGPP and VGVIGPPGLQGL. Gly residues predominate over residues 1190 to 1199; sequence GLPGGVGQPG. Over residues 1213 to 1222 the composition is skewed to pro residues; sequence PGPPGAPGIP. Over residues 1234–1243 the composition is skewed to low complexity; it reads SGPSGAAGPP. Residues 1318-1330 show a composition bias toward basic and acidic residues; the sequence is MGREGREGEKGAK. Positions 1405–1416 are enriched in low complexity; the sequence is IGLIGLIGPPGE. Over residues 1429–1443 the composition is skewed to pro residues; the sequence is QGPPGPKGDPGPPGP. The Collagen-like 6 domain occupies 1430–1488; sequence GPPGPKGDPGPPGPIGSLGHPGPPGVAGPLGQKGSKGSPGSMGPRGDTGPAGPPGPPGA. Over residues 1458–1479 the composition is skewed to low complexity; it reads PLGQKGSKGSPGSMGPRGDTGP. The region spanning 1514–1744 is the Fibrillar collagen NC1 domain; that stretch reads EEVLASLTSL…GFELGPVCFS (231 aa). 2 disulfide bridges follow: C1585/C1742 and C1651/C1696.

Belongs to the fibrillar collagen family. Trimers of two alpha 1(V) and one alpha 2(V) chains in most tissues and trimers of one alpha 1(V), one alpha 2(V), and one alpha 3(V) chains in placenta. Prolines at the third position of the tripeptide repeating unit (G-X-Y) are hydroxylated in some or all of the chains. In terms of tissue distribution, detected in fibroblasts (at protein level). Detected in urine (at protein level).

It is found in the secreted. Its subcellular location is the extracellular space. It localises to the extracellular matrix. Type V collagen is a member of group I collagen (fibrillar forming collagen). It is a minor connective tissue component of nearly ubiquitous distribution. Type V collagen binds to DNA, heparan sulfate, thrombospondin, heparin, and insulin. This chain is Collagen alpha-3(V) chain (COL5A3), found in Homo sapiens (Human).